A 336-amino-acid chain; its full sequence is MDVASLISPSESDTVPTFRSRSIQNSSASHYKRLSEQSTGSYFSAVPTHTTSYSRTPQPPLSPPAEDQSKCSLPSISILLENADGAAAHAAKRQRNSLSTHRDSDPRPPYDSITPHAMPPTPPLRPGSGFHSNGHSPSTSSVSAASSSALMKNTESYPQAPIGLPSPTDRSSISSQGSVQHAASAPYASPAPSVSSFSSPIEPSTPSTAAYYQRNPAPNTFQNPSPFPQTSTASLPSPGHQQMISPVTPAWQHHHYFPPSSSTSYQQNHDRYICRTCHKAFSRPSSLRIHSHSHTGEKPFRCTHAGCGKAFSVRSNMKRHERGCHTGRPVATAMVQ.

The segment at 1 to 245 (MDVASLISPS…PSPGHQQMIS (245 aa)) is disordered. Polar residues-rich tracts occupy residues 7-29 (ISPSESDTVPTFRSRSIQNSSAS) and 36-56 (EQSTGSYFSAVPTHTTSYSRT). Low complexity predominate over residues 136–149 (SPSTSSVSAASSSA). The segment covering 168–181 (TDRSSISSQGSVQH) has biased composition (polar residues). The segment covering 182–210 (AASAPYASPAPSVSSFSSPIEPSTPSTAA) has biased composition (low complexity). Residues 216–245 (PAPNTFQNPSPFPQTSTASLPSPGHQQMIS) are compositionally biased toward polar residues. 2 consecutive C2H2-type zinc fingers follow at residues 272-294 (YICRTCHKAFSRPSSLRIHSHSH) and 300-325 (FRCTHAGCGKAFSVRSNMKRHERGCH).

The protein localises to the nucleus. Its function is as follows. Transcription factor that controls morphogenesis and virulence. Acts as a positive regulator of gliotixin and protease production. In Aspergillus fumigatus (strain CBS 144.89 / FGSC A1163 / CEA10) (Neosartorya fumigata), this protein is C2H2 finger domain transcription factor mtfA.